The chain runs to 516 residues: uncharacterized protein (516 aa).

2 PFTB repeats span residues 45–86 (RQDA…QRAD) and 401–443 (DERA…DGSE).

This is an uncharacterized protein from Bradyrhizobium diazoefficiens (strain JCM 10833 / BCRC 13528 / IAM 13628 / NBRC 14792 / USDA 110).